The primary structure comprises 89 residues: Probable Fe(2+)-trafficking protein (89 aa).

It belongs to the Fe(2+)-trafficking protein family.

Its function is as follows. Could be a mediator in iron transactions between iron acquisition and iron-requiring processes, such as synthesis and/or repair of Fe-S clusters in biosynthetic enzymes. The protein is Probable Fe(2+)-trafficking protein of Acinetobacter baumannii (strain AB0057).